Consider the following 267-residue polypeptide: Formamidopyrimidine-DNA glycosylase (267 aa).

Catalysis depends on Pro-2, which acts as the Schiff-base intermediate with DNA. The Proton donor role is filled by Glu-3. The Proton donor; for beta-elimination activity role is filled by Lys-58. Residues His-91, Arg-110, and Arg-152 each contribute to the DNA site. The FPG-type zinc-finger motif lies at 233–267; that stretch reads DVYGRGTDACTRCGGALEEIRLGNRSTVFCPRCQT. Arg-257 acts as the Proton donor; for delta-elimination activity in catalysis.

The protein belongs to the FPG family. As to quaternary structure, monomer. The cofactor is Zn(2+).

It carries out the reaction Hydrolysis of DNA containing ring-opened 7-methylguanine residues, releasing 2,6-diamino-4-hydroxy-5-(N-methyl)formamidopyrimidine.. The enzyme catalyses 2'-deoxyribonucleotide-(2'-deoxyribose 5'-phosphate)-2'-deoxyribonucleotide-DNA = a 3'-end 2'-deoxyribonucleotide-(2,3-dehydro-2,3-deoxyribose 5'-phosphate)-DNA + a 5'-end 5'-phospho-2'-deoxyribonucleoside-DNA + H(+). In terms of biological role, involved in base excision repair of DNA damaged by oxidation or by mutagenic agents. Acts as a DNA glycosylase that recognizes and removes damaged bases. Has a preference for oxidized purines, such as 7,8-dihydro-8-oxoguanine (8-oxoG). Has AP (apurinic/apyrimidinic) lyase activity and introduces nicks in the DNA strand. Cleaves the DNA backbone by beta-delta elimination to generate a single-strand break at the site of the removed base with both 3'- and 5'-phosphates. This Geobacter metallireducens (strain ATCC 53774 / DSM 7210 / GS-15) protein is Formamidopyrimidine-DNA glycosylase.